Reading from the N-terminus, the 457-residue chain is Cystathionine beta-lyase (457 aa).

The interval 1 to 41 (MSTPNSDSPAAQAAKKVFSRLDLDGHNLPPSPAPSSPHNGR) is disordered.

It belongs to the trans-sulfuration enzymes family. Pyridoxal 5'-phosphate serves as cofactor.

Its subcellular location is the cytoplasm. It is found in the nucleus. The catalysed reaction is L,L-cystathionine + H2O = L-homocysteine + pyruvate + NH4(+). It catalyses the reaction an S-substituted L-cysteine + H2O = a thiol + pyruvate + NH4(+). The protein operates within amino-acid biosynthesis; L-methionine biosynthesis via de novo pathway; L-homocysteine from L-cystathionine: step 1/1. Functionally, involved in de novo synthesis of methionine. The protein is Cystathionine beta-lyase (met-2) of Neurospora crassa (strain ATCC 24698 / 74-OR23-1A / CBS 708.71 / DSM 1257 / FGSC 987).